Reading from the N-terminus, the 105-residue chain is Iron-sulfur cluster assembly protein CyaY (105 aa).

This sequence belongs to the frataxin family.

Its function is as follows. Involved in iron-sulfur (Fe-S) cluster assembly. May act as a regulator of Fe-S biogenesis. The protein is Iron-sulfur cluster assembly protein CyaY of Chromobacterium violaceum (strain ATCC 12472 / DSM 30191 / JCM 1249 / CCUG 213 / NBRC 12614 / NCIMB 9131 / NCTC 9757 / MK).